A 138-amino-acid chain; its full sequence is Eukaryotic translation initiation factor 1A (138 aa).

Over residues 1 to 15 (MPKNKGKGGKNRRRG) the composition is skewed to basic residues. Residues 1–28 (MPKNKGKGGKNRRRGKNENENEKRELTY) form a disordered region. A compositionally biased stretch (basic and acidic residues) spans 16–27 (KNENENEKRELT). Residues 22-96 (EKRELTYAEE…EKGDVILKYT (75 aa)) form the S1-like domain.

The protein belongs to the eIF-1A family.

Functionally, seems to be required for maximal rate of protein biosynthesis. Enhances ribosome dissociation into subunits and stabilizes the binding of the initiator Met-tRNA(I) to 40 S ribosomal subunits. The chain is Eukaryotic translation initiation factor 1A (tif11) from Schizosaccharomyces pombe (strain 972 / ATCC 24843) (Fission yeast).